A 103-amino-acid polypeptide reads, in one-letter code: Acyl carrier protein (103 aa).

The 76-residue stretch at 14-89 (NIVSNIVQDI…EFIDFTLQTI (76 aa)) folds into the Carrier domain. Residue serine 49 is modified to O-(pantetheine 4'-phosphoryl)serine.

This sequence belongs to the acyl carrier protein (ACP) family. 4'-phosphopantetheine is transferred from CoA to a specific serine of apo-ACP by AcpS. This modification is essential for activity because fatty acids are bound in thioester linkage to the sulfhydryl of the prosthetic group.

Its subcellular location is the plastid. It localises to the cyanelle. The protein operates within lipid metabolism; fatty acid biosynthesis. Carrier of the growing fatty acid chain in fatty acid biosynthesis. The sequence is that of Acyl carrier protein from Cyanophora paradoxa.